An 844-amino-acid chain; its full sequence is NADPH-Fe(3+) oxidoreductase subunit alpha (844 aa).

In terms of domain architecture, 2Fe-2S ferredoxin-type spans 1–78 (MVSLTIDGKD…GIKVTTQSEK (78 aa)). [2Fe-2S] cluster-binding residues include C34, C45, C48, and C62. The 4Fe-4S His(Cys)3-ligated-type domain occupies 78 to 117 (KLSRIRQKIMELMLVNHPLDCPVCDAGGECDLQNACYGLG). [4Fe-4S] cluster contacts are provided by H94, C98, C101, C107, C146, C149, C152, C186, C189, C192, C196, C222, C225, C229, and C256. 2 4Fe-4S ferredoxin-type domains span residues 137–168 (PLIE…IRVV) and 177–206 (DTVD…SKPF). The region spanning 215 to 270 (FTTTPSVCPFCATGCQIEYHSRNGRVERVTSDDSTYNSGNLCINGRFGYSYINSPD) is the 4Fe-4S Mo/W bis-MGD-type domain.

In terms of assembly, heterotetramer with 2 beta subunits. [4Fe-4S] cluster serves as cofactor.

Its subcellular location is the cell inner membrane. Its activity is regulated as follows. Not regulated by FAD or FMN. The SfrAB enzymatic complex is probably involved in acetate metabolism and does not participate directly in the reduction of Fe(3+) chelates. May serve as a major route for NADP regeneration. The sequence is that of NADPH-Fe(3+) oxidoreductase subunit alpha (sfrA) from Geobacter sulfurreducens (strain DL-1 / KN400).